A 194-amino-acid chain; its full sequence is Type II secretion system protein H (194 aa).

The propeptide at 1 to 6 is leader sequence; it reads MTATRG. F7 bears the N-methylphenylalanine mark. The chain crosses the membrane as a helical span at residues 12–32; sequence ILLVLVLVSASAVAVIATFPV.

It belongs to the GSP H family. In terms of assembly, type II secretion is composed of four main components: the outer membrane complex, the inner membrane complex, the cytoplasmic secretion ATPase and the periplasm-spanning pseudopilus. Interacts with core component EpsG. Post-translationally, cleaved by prepilin peptidase. In terms of processing, methylated by prepilin peptidase at the amino group of the N-terminal phenylalanine once the leader sequence is cleaved by prepilin peptidase.

Its subcellular location is the cell inner membrane. Component of the type II secretion system required for the energy-dependent secretion of extracellular factors such as proteases and toxins from the periplasm. Part of the pseudopilus tip complex that is critical for the recognition and binding of secretion substrates. The protein is Type II secretion system protein H (epsH) of Vibrio cholerae serotype O1 (strain ATCC 39315 / El Tor Inaba N16961).